A 491-amino-acid chain; its full sequence is UDP-N-acetylmuramate--L-alanine ligase (491 aa).

ATP is bound at residue 126–132 (GTHGKTT).

It belongs to the MurCDEF family.

It localises to the cytoplasm. The enzyme catalyses UDP-N-acetyl-alpha-D-muramate + L-alanine + ATP = UDP-N-acetyl-alpha-D-muramoyl-L-alanine + ADP + phosphate + H(+). The protein operates within cell wall biogenesis; peptidoglycan biosynthesis. In terms of biological role, cell wall formation. The protein is UDP-N-acetylmuramate--L-alanine ligase of Yersinia pestis (strain Pestoides F).